A 311-amino-acid chain; its full sequence is Ribosomal RNA small subunit methyltransferase H (311 aa).

S-adenosyl-L-methionine contacts are provided by residues 32–34, aspartate 52, phenylalanine 78, aspartate 99, and glutamine 106; that span reads GGH.

The protein belongs to the methyltransferase superfamily. RsmH family.

Its subcellular location is the cytoplasm. It catalyses the reaction cytidine(1402) in 16S rRNA + S-adenosyl-L-methionine = N(4)-methylcytidine(1402) in 16S rRNA + S-adenosyl-L-homocysteine + H(+). Functionally, specifically methylates the N4 position of cytidine in position 1402 (C1402) of 16S rRNA. The protein is Ribosomal RNA small subunit methyltransferase H of Halothermothrix orenii (strain H 168 / OCM 544 / DSM 9562).